The sequence spans 1177 residues: Tyrosine-protein kinase hopscotch (1177 aa).

The disordered stretch occupies residues 1-41; that stretch reads MALANGGEDRMDDSSSGRTSLADSASLTNSSLRSGTSSQSI. A compositionally biased stretch (polar residues) spans 16–41; it reads SGRTSLADSASLTNSSLRSGTSSQSI. Phosphoserine occurs at positions 40 and 321. An FERM domain is found at 46–414; the sequence is GTIRVFNFTT…IYIRLSSKWM (369 aa). Positions 433–539 constitute an SH2; atypical domain; that stretch reads HCHGPIGGAY…YRIPASKYDK (107 aa). 2 consecutive Protein kinase domains span residues 582-843 and 892-1164; these read YPDS…AEIL and YNME…HPTD. ATP is bound by residues 898-906 and lysine 926; that span reads IGRGHYGTV. Residue aspartate 1014 is the Proton acceptor of the active site. Phosphotyrosine; by autocatalysis occurs at positions 1047 and 1048. Residues 1158–1177 form a disordered region; that stretch reads KVTHPTDGHQSPPNQPTDAE.

It belongs to the protein kinase superfamily. Tyr protein kinase family. JAK subfamily. In terms of assembly, forms a complex with Hsp83 and piwi; probably Hop mediates the interaction between piwi and Hsp83.

It localises to the endomembrane system. The enzyme catalyses L-tyrosyl-[protein] + ATP = O-phospho-L-tyrosyl-[protein] + ADP + H(+). Tyrosine kinase of the non-receptor type, phosphorylates the marelle protein. Required maternally for the establishment of the normal array of embryonic segments: involved in the control of pair-rule gene transcription in a stripe-specific manner. Together with Hsp83 and piwi, mediates canalization, also known as developmental robustness, likely via epigenetic silencing of existing genetic variants and suppression of transposon-induced new genetic variation. The chain is Tyrosine-protein kinase hopscotch (hop) from Drosophila melanogaster (Fruit fly).